A 231-amino-acid polypeptide reads, in one-letter code: uncharacterized protein (231 aa).

The protein belongs to the DnaA family. HdA subfamily.

This is an uncharacterized protein from Haemophilus influenzae (strain ATCC 51907 / DSM 11121 / KW20 / Rd).